We begin with the raw amino-acid sequence, 557 residues long: Multidrug transporter FLR1 (557 aa).

Residues N33, N48, and N106 are each glycosylated (N-linked (GlcNAc...) asparagine). Residues S44–E57 are compositionally biased toward low complexity. The segment at S44–L67 is disordered. Helical transmembrane passes span A113 to Y133, V149 to F169, L181 to A201, F204 to T224, L238 to L258, W271 to F291, L355 to F375, and G387 to F407. N418 is a glycosylation site (N-linked (GlcNAc...) asparagine). 4 helical membrane passes run T426–W446, V450–F470, Y484–F506, and V521–V541.

The protein belongs to the major facilitator superfamily.

The protein localises to the cell membrane. In terms of biological role, multidrug transporter that confers resistance to 5-flucytosine (5-FC) and clotrimazole. Also confers resistance to benomyl, but not 4-nitroquinoline-N-oxide, cycloheximide, or fluconazole. Plays direct roles in extrusion of 5-flucytosine and clotrimazole. This chain is Multidrug transporter FLR1, found in Candida glabrata (strain ATCC 2001 / BCRC 20586 / JCM 3761 / NBRC 0622 / NRRL Y-65 / CBS 138) (Yeast).